The sequence spans 485 residues: MKFVDEVRIFVKAGDGGNGAVSFRREKYIERGGPNGGDGGNGGSVVFVADPQLTTLLDYRYQQHHRARNGEHGMGSDCNGRAAEDMVLKVPVGTLVKDANTGELLVDLSEAGQRWVAAKGGRGGLGNMNFATSTRQTPRFAQDGTKGEELTLRLELKLLADVGLLGFPNAGKSTFISRVSRARPKVADYPFTTLVPNLGMVQYKDGLSFVMADIPGIIEGASEGVGLGHQFLRHVERCKVLIHLIDMGAEGEGRAPLHDFDVLNAELGKYSPELASKPQVVAANKLDLPDAQARLEGFTEALRERGIRVYPVSCATGEGMQPLMDSVAEVLFTGRTEKLHVEIPAKAARAGKAKTKAAEKKALARNAGAAAATKSATKKSAAAKKAVTKKAPARKAGAVAKTSAARKAGTAAAKKAPARKSGTAPVKKAAAKKAPARKSGTAPAKKSAVKKASARKSGSSGKAAAKKASAATKRAPARKSGGGRS.

Residues 1-159 (MKFVDEVRIF…LTLRLELKLL (159 aa)) enclose the Obg domain. One can recognise an OBG-type G domain in the interval 160-332 (ADVGLLGFPN…LMDSVAEVLF (173 aa)). GTP contacts are provided by residues 166–173 (GFPNAGKS), 191–195 (FTTLV), 213–216 (DIPG), 284–287 (NKLD), and 313–315 (SCA). Mg(2+) contacts are provided by S173 and T193. Low complexity-rich tracts occupy residues 367–385 (AGAA…AAKK), 394–428 (RKAG…PVKK), 437–446 (RKSGTAPAKK), and 455–474 (RKSG…ATKR). Positions 367–485 (AGAAAATKSA…PARKSGGGRS (119 aa)) are disordered.

This sequence belongs to the TRAFAC class OBG-HflX-like GTPase superfamily. OBG GTPase family. Monomer. Mg(2+) is required as a cofactor.

It is found in the cytoplasm. Its function is as follows. An essential GTPase which binds GTP, GDP and possibly (p)ppGpp with moderate affinity, with high nucleotide exchange rates and a fairly low GTP hydrolysis rate. Plays a role in control of the cell cycle, stress response, ribosome biogenesis and in those bacteria that undergo differentiation, in morphogenesis control. The sequence is that of GTPase Obg from Myxococcus xanthus (strain DK1622).